A 260-amino-acid chain; its full sequence is Proteasome subunit alpha type-1 (260 aa).

Residues 240 to 260 (PRTTGGAAAAAAPGGAEPMQM) are disordered. Residues 244–260 (GGAAAAAAPGGAEPMQM) are compositionally biased toward low complexity.

The protein belongs to the peptidase T1A family. In terms of assembly, the 26S proteasome consists of a 20S proteasome core and two 19S regulatory subunits. The 20S proteasome core is composed of 28 subunits that are arranged in four stacked rings, resulting in a barrel-shaped structure. The two end rings are each formed by seven alpha subunits, and the two central rings are each formed by seven beta subunits. The catalytic chamber with the active sites is on the inside of the barrel.

It is found in the cytoplasm. The protein localises to the nucleus. The proteasome is a multicatalytic proteinase complex which is characterized by its ability to cleave peptides with Arg, Phe, Tyr, Leu, and Glu adjacent to the leaving group at neutral or slightly basic pH. The proteasome has an ATP-dependent proteolytic activity. The protein is Proteasome subunit alpha type-1 (pas-6) of Caenorhabditis elegans.